The chain runs to 109 residues: MLVILLMVVVLALSSAQDPNRDFVVSSQDVRERQPSSQQGTVGGQSQESQLRDQQQQQSLQQSQEQQPQPQLQQTKQPQRPVKGQPLPQQQQQQNQRPRPRYQQPRRAV.

Residues Met1–Ala16 form the signal peptide. Position 17 is a pyrrolidone carboxylic acid (Gln17). Residues Gln17–Val109 form a disordered region. A compositionally biased stretch (low complexity) spans Pro35–Val109. Residues Arg107–Val109 constitute a propeptide that is removed on maturation.

In terms of processing, predominantly proteolytically processed at its C-terminus before secretion to produce the major form gliadoralin A 1-90. Further proteloytically processed after secretion to produce minor forms. Potential substrate of transglutaminase. As to expression, found in saliva (at protein level). Secreted from the submandibular gland.

The protein localises to the secreted. May play a role in the formation of the protective mucosal protein pellicle involved in the reinforcement and protection of oral mucosal epithelial surface. This chain is Gliadoralin-A, found in Rattus norvegicus (Rat).